The following is a 521-amino-acid chain: 2-isopropylmalate synthase (521 aa).

One can recognise a Pyruvate carboxyltransferase domain in the interval 12-274 (VIIFDTTLRD…WNKIDTTMLT (263 aa)). Mn(2+) is bound by residues Asp-21, His-209, His-211, and Asn-245. The regulatory domain stretch occupies residues 398–521 (KLVSLTVIAG…DMAAPAAAAS (124 aa)).

Belongs to the alpha-IPM synthase/homocitrate synthase family. LeuA type 1 subfamily. Homodimer. Requires Mn(2+) as cofactor.

It localises to the cytoplasm. The catalysed reaction is 3-methyl-2-oxobutanoate + acetyl-CoA + H2O = (2S)-2-isopropylmalate + CoA + H(+). The protein operates within amino-acid biosynthesis; L-leucine biosynthesis; L-leucine from 3-methyl-2-oxobutanoate: step 1/4. In terms of biological role, catalyzes the condensation of the acetyl group of acetyl-CoA with 3-methyl-2-oxobutanoate (2-ketoisovalerate) to form 3-carboxy-3-hydroxy-4-methylpentanoate (2-isopropylmalate). In Rhodopseudomonas palustris (strain BisA53), this protein is 2-isopropylmalate synthase.